Consider the following 261-residue polypeptide: Mlc titration factor A (261 aa).

Residues His-111, His-148, His-152, and Glu-211 each contribute to the Zn(2+) site.

This sequence belongs to the MtfA family. In terms of assembly, interacts with Mlc. The cofactor is Zn(2+).

It localises to the cytoplasm. Its function is as follows. Involved in the modulation of the activity of the glucose-phosphotransferase system (glucose-PTS). Interacts with the transcriptional repressor Mlc, preventing its interaction with DNA and leading to the modulation of expression of genes regulated by Mlc, including ptsG, which encodes the PTS system glucose-specific EIICB component. Functionally, shows zinc-dependent metallopeptidase activity. This Edwardsiella ictaluri (strain 93-146) protein is Mlc titration factor A.